The chain runs to 460 residues: Endoglucanase 2 (460 aa).

An N-terminal signal peptide occupies residues 1 to 32; it reads MIKGSSLKRIKSLVMMAIFSVSIITTAIVSSA. E99 (proton donor) is an active-site residue. D155 (nucleophile) is an active-site residue. Positions 400 to 460 constitute a Dockerin domain; sequence QQGLKGDVNN…FAQLKVKLLN (61 aa).

This sequence belongs to the glycosyl hydrolase 8 (cellulase D) family.

The catalysed reaction is Endohydrolysis of (1-&gt;4)-beta-D-glucosidic linkages in cellulose, lichenin and cereal beta-D-glucans.. In Ruminiclostridium josui (Clostridium josui), this protein is Endoglucanase 2 (celB).